Consider the following 255-residue polypeptide: Short chain dehydrogenase adrF (255 aa).

The NADP(+) site is built by Ile11, Arg118, Tyr150, Lys154, and Val183. Tyr150 acts as the Proton acceptor in catalysis. Lys154 serves as the catalytic Lowers pKa of active site Tyr.

This sequence belongs to the short-chain dehydrogenases/reductases (SDR) family.

It participates in secondary metabolite biosynthesis; terpenoid biosynthesis. Short chain dehydrogenase; part of the gene cluster that mediates the biosynthesis of andrastins, meroterpenoid compounds that exhibit inhibitory activity against ras farnesyltransferase, suggesting that they could be promising leads for antitumor agents. The first step of the pathway is the synthesis of 3,5-dimethylorsellinic acid (DMOA) by the polyketide synthase adrD via condensation of one acetyl-CoA starter unit with 3 malonyl-CoA units and 2 methylations. DMAO is then converted to farnesyl-DMAO by the prenyltransferase adrG. The methyltransferase adrK catalyzes the methylation of the carboxyl group of farnesyl-DMAO to farnesyl-DMAO methyl ester which is further converted to epoxyfarnesyl-DMAO methyl ester by the FAD-dependent monooxygenase adrH. The terpene cyclase adrI then catalyzes the carbon skeletal rearrangement to generate the andrastin E, the first compound in the pathway having the andrastin scaffold, with the tetracyclic ring system. The post-cyclization tailoring enzymes adrF, adrE, adrJ, and adrA, are involved in the conversion of andrastin E into andrastin A. The short chain dehydrogenase adrF is responsible for the oxidation of the C-3 a hydroxyl group of andrastin E to yield the corresponding ketone, andrastin D. The ketoreductase adrE stereoselectively reduces the carbonyl moiety to reverse the stereochemistry of the C-3 position to yield andrastin F. The acetyltransferase adrJ is the acetyltransferase that attaches the acetyl group to the C-3 hydroxyl group of andrastin F to yield andrastin C. Finally, the cytochrome P450 monooxygenase adrA catalyzes two sequential oxidation reactions of the C-23 methyl group, to generate the corresponding alcohol andrastin B, and aldehyde andrastin A. This is Short chain dehydrogenase adrF from Penicillium rubens (strain ATCC 28089 / DSM 1075 / NRRL 1951 / Wisconsin 54-1255) (Penicillium chrysogenum).